Reading from the N-terminus, the 411-residue chain is Putative glycosyltransferase SCO3672 (411 aa).

10 consecutive transmembrane segments (helical) span residues 7-27 (IAAA…LAAL), 45-65 (PVPL…AWAG), 70-90 (VVPL…VGAL), 120-140 (ETGP…TGAF), 148-168 (GVVG…AAVE), 169-189 (LMDG…GFLL), 197-217 (IALG…AAVL), 227-247 (GAGV…LVLL), 277-297 (GVVV…VLAH), and 301-321 (VGGQ…LGLL).

Belongs to the glycosyltransferase 4 family.

The protein resides in the cell membrane. This Streptomyces coelicolor (strain ATCC BAA-471 / A3(2) / M145) protein is Putative glycosyltransferase SCO3672.